The chain runs to 124 residues: Fluoride-specific ion channel FluC (124 aa).

A run of 4 helical transmembrane segments spans residues 4–24 (LLLV…ISIF), 35–55 (FGTL…YALG), 60–80 (ISPE…TTFS), and 102–122 (VVLN…LVFS). G74 and T77 together coordinate Na(+).

The protein belongs to the fluoride channel Fluc/FEX (TC 1.A.43) family.

The protein localises to the cell inner membrane. The enzyme catalyses fluoride(in) = fluoride(out). With respect to regulation, na(+) is not transported, but it plays an essential structural role and its presence is essential for fluoride channel function. Fluoride-specific ion channel. Important for reducing fluoride concentration in the cell, thus reducing its toxicity. The polypeptide is Fluoride-specific ion channel FluC (Shewanella sp. (strain ANA-3)).